Consider the following 220-residue polypeptide: Fructose-6-phosphate aldolase 1 (220 aa).

The active-site Schiff-base intermediate with substrate is the lysine 85.

This sequence belongs to the transaldolase family. Type 3A subfamily. In terms of assembly, homodecamer. Five subunits are arranged as a pentamer, and two ring-like pentamers pack like a donut to form the decamer.

Its subcellular location is the cytoplasm. It catalyses the reaction beta-D-fructose 6-phosphate = dihydroxyacetone + D-glyceraldehyde 3-phosphate. Inhibited by glycerol, inorganic phosphate and arabinose 5-phosphate. Catalyzes the reversible formation of fructose 6-phosphate from dihydroxyacetone (DHA) and D-glyceraldehyde 3-phosphate via an aldolization reaction. Can utilize several aldehydes as acceptor compounds in vitro, and hydroxyacetone (HA) or 1-hydroxy-butan-2-one as alternative donor substrate. Is also able to catalyze the direct stereoselective self-aldol addition of glycolaldehyde to furnish D-(-)-threose, and cross-aldol reactions of glycolaldehyde to other aldehyde acceptors. Is not able to cleave fructose, fructose 1-phosphate, glucose 6-phosphate, sedoheptulose 1,7-bisphosphate, xylulose 5-phosphate, ribulose 5-phosphate, and fructose 1,6-bisphosphate; cannot use dihydroxyacetone phosphate as donor compound nor D-glyceraldehyde as acceptor. Does not display transaldolase activity. The polypeptide is Fructose-6-phosphate aldolase 1 (fsaA) (Escherichia coli (strain K12)).